The sequence spans 295 residues: Ethanolamine ammonia-lyase small subunit (295 aa).

Val-207, Glu-228, and Cys-258 together coordinate adenosylcob(III)alamin.

It belongs to the EutC family. As to quaternary structure, the basic unit is a heterodimer which dimerizes to form tetramers. The heterotetramers trimerize; 6 large subunits form a core ring with 6 small subunits projecting outwards. Adenosylcob(III)alamin is required as a cofactor.

The protein resides in the bacterial microcompartment. The enzyme catalyses ethanolamine = acetaldehyde + NH4(+). The protein operates within amine and polyamine degradation; ethanolamine degradation. Functionally, catalyzes the deamination of various vicinal amino-alcohols to oxo compounds. Allows this organism to utilize ethanolamine as the sole source of nitrogen and carbon in the presence of external vitamin B12. This is Ethanolamine ammonia-lyase small subunit from Escherichia coli O81 (strain ED1a).